The sequence spans 96 residues: Small ribosomal subunit protein bS6 (96 aa).

The protein belongs to the bacterial ribosomal protein bS6 family.

Binds together with bS18 to 16S ribosomal RNA. This Mycobacteroides abscessus (strain ATCC 19977 / DSM 44196 / CCUG 20993 / CIP 104536 / JCM 13569 / NCTC 13031 / TMC 1543 / L948) (Mycobacterium abscessus) protein is Small ribosomal subunit protein bS6.